The primary structure comprises 263 residues: Proteasome subunit alpha type-1 (263 aa).

Residue M1 is modified to N-acetylmethionine. At S110 the chain carries Phosphoserine; alternate. O-linked (GlcNAc) serine; alternate glycosylation is present at S110. K115 is covalently cross-linked (Glycyl lysine isopeptide (Lys-Gly) (interchain with G-Cter in ubiquitin)). Position 177 is a phosphoserine (S177). K208 is covalently cross-linked (Glycyl lysine isopeptide (Lys-Gly) (interchain with G-Cter in ubiquitin)). The disordered stretch occupies residues 232–263; sequence FLEGLEERPQRKAQPAQPADEPAEKADEPMEH. A compositionally biased stretch (basic and acidic residues) spans 253-263; it reads PAEKADEPMEH.

The protein belongs to the peptidase T1A family. As to quaternary structure, the 26S proteasome consists of a 20S proteasome core and two 19S regulatory subunits. The 20S proteasome core is a barrel-shaped complex made of 28 subunits that are arranged in four stacked rings. The two outer rings are each formed by seven alpha subunits, and the two inner rings are formed by seven beta subunits. The proteolytic activity is exerted by three beta-subunits PSMB5, PSMB6 and PSMB7. Interacts with NOTCH3. Interacts with ZFAND1.

The protein resides in the cytoplasm. Its subcellular location is the nucleus. In terms of biological role, component of the 20S core proteasome complex involved in the proteolytic degradation of most intracellular proteins. This complex plays numerous essential roles within the cell by associating with different regulatory particles. Associated with two 19S regulatory particles, forms the 26S proteasome and thus participates in the ATP-dependent degradation of ubiquitinated proteins. The 26S proteasome plays a key role in the maintenance of protein homeostasis by removing misfolded or damaged proteins that could impair cellular functions, and by removing proteins whose functions are no longer required. Associated with the PA200 or PA28, the 20S proteasome mediates ubiquitin-independent protein degradation. This type of proteolysis is required in several pathways including spermatogenesis (20S-PA200 complex) or generation of a subset of MHC class I-presented antigenic peptides (20S-PA28 complex). This chain is Proteasome subunit alpha type-1 (PSMA1), found in Macaca fascicularis (Crab-eating macaque).